The sequence spans 155 residues: 6,7-dimethyl-8-ribityllumazine synthase (155 aa).

5-amino-6-(D-ribitylamino)uracil contacts are provided by residues phenylalanine 22, 56 to 58, and 80 to 82; these read AFE and AVI. 85-86 contacts (2S)-2-hydroxy-3-oxobutyl phosphate; sequence NT. Histidine 88 serves as the catalytic Proton donor. Phenylalanine 113 is a 5-amino-6-(D-ribitylamino)uracil binding site. A (2S)-2-hydroxy-3-oxobutyl phosphate-binding site is contributed by arginine 127.

The protein belongs to the DMRL synthase family.

It carries out the reaction (2S)-2-hydroxy-3-oxobutyl phosphate + 5-amino-6-(D-ribitylamino)uracil = 6,7-dimethyl-8-(1-D-ribityl)lumazine + phosphate + 2 H2O + H(+). Its pathway is cofactor biosynthesis; riboflavin biosynthesis; riboflavin from 2-hydroxy-3-oxobutyl phosphate and 5-amino-6-(D-ribitylamino)uracil: step 1/2. Functionally, catalyzes the formation of 6,7-dimethyl-8-ribityllumazine by condensation of 5-amino-6-(D-ribitylamino)uracil with 3,4-dihydroxy-2-butanone 4-phosphate. This is the penultimate step in the biosynthesis of riboflavin. This is 6,7-dimethyl-8-ribityllumazine synthase from Streptococcus pneumoniae serotype 2 (strain D39 / NCTC 7466).